Here is a 360-residue protein sequence, read N- to C-terminus: DNA replication and repair protein RecF (360 aa).

Residue 30 to 37 (GANGSGKT) participates in ATP binding.

It belongs to the RecF family.

It is found in the cytoplasm. The RecF protein is involved in DNA metabolism; it is required for DNA replication and normal SOS inducibility. RecF binds preferentially to single-stranded, linear DNA. It also seems to bind ATP. In Acinetobacter baumannii (strain AB307-0294), this protein is DNA replication and repair protein RecF.